Consider the following 257-residue polypeptide: Capsid protein (257 aa).

A Bipartite nuclear localization signal motif is present at residues 3–20 (KRTGDILMSSPLSKFRRK). The short motif at 40 to 54 (KRRSWTYRPMYRKPR) is the Nuclear localization signal element. A zinc finger lies at 68 to 85 (CEGPCKVQSYEQRDDVKH). Residues 101 to 122 (ITHRVGKRFCIKSIYILGKIWM) carry the Nuclear export signal motif. The Bipartite nuclear localization signal signature appears at 201–248 (KRFFKVNTHVVYNHQEQAKYENHTENALLLYMACTHASNPVYATLKIR).

The protein belongs to the geminiviridae capsid protein family. As to quaternary structure, homomultimer. Binds to single-stranded and double-stranded viral DNA. Interacts (via nuclear localization signals) with host importin alpha-1a.

The protein localises to the virion. Its subcellular location is the host nucleus. Its function is as follows. Encapsidates the viral genome into characteristic twinned ('geminate') particles. Binds the genomic viral ssDNA and shuttles it into and out of the cell nucleus. Plays a role in protection of the genome from degradation, virus acquisition and transmission by insect vectors, infectivity, and systemic movement. The CP of monopartite geminiviruses is absolutely essential for virus movement. This Solanum lycopersicum (Tomato) protein is Capsid protein.